We begin with the raw amino-acid sequence, 220 residues long: Small ribosomal subunit protein mS23 (220 aa).

Belongs to the mitochondrion-specific ribosomal protein mS23 family. Component of the mitochondrial small ribosomal subunit (mt-SSU). Mature yeast 74S mitochondrial ribosomes consist of a small (37S) and a large (54S) subunit. The 37S small subunit contains a 15S ribosomal RNA (15S mt-rRNA) and at least 32 different proteins. The 54S large subunit contains a 21S rRNA (21S mt-rRNA) and at least 45 different proteins.

Its subcellular location is the mitochondrion. Functionally, component of the mitochondrial ribosome (mitoribosome), a dedicated translation machinery responsible for the synthesis of mitochondrial genome-encoded proteins, including at least some of the essential transmembrane subunits of the mitochondrial respiratory chain. The mitoribosomes are attached to the mitochondrial inner membrane and translation products are cotranslationally integrated into the membrane. The sequence is that of Small ribosomal subunit protein mS23 (rsm25) from Schizosaccharomyces pombe (strain 972 / ATCC 24843) (Fission yeast).